A 192-amino-acid polypeptide reads, in one-letter code: Pyridoxal 5'-phosphate synthase subunit PdxT (192 aa).

53–55 (GES) lines the L-glutamine pocket. Cys85 acts as the Nucleophile in catalysis. Residues Arg112 and 140-141 (IR) contribute to the L-glutamine site. Catalysis depends on charge relay system residues His176 and Glu178.

Belongs to the glutaminase PdxT/SNO family. In terms of assembly, in the presence of PdxS, forms a dodecamer of heterodimers. Only shows activity in the heterodimer.

It catalyses the reaction aldehydo-D-ribose 5-phosphate + D-glyceraldehyde 3-phosphate + L-glutamine = pyridoxal 5'-phosphate + L-glutamate + phosphate + 3 H2O + H(+). The enzyme catalyses L-glutamine + H2O = L-glutamate + NH4(+). Its pathway is cofactor biosynthesis; pyridoxal 5'-phosphate biosynthesis. Catalyzes the hydrolysis of glutamine to glutamate and ammonia as part of the biosynthesis of pyridoxal 5'-phosphate. The resulting ammonia molecule is channeled to the active site of PdxS. The sequence is that of Pyridoxal 5'-phosphate synthase subunit PdxT from Natronomonas pharaonis (strain ATCC 35678 / DSM 2160 / CIP 103997 / JCM 8858 / NBRC 14720 / NCIMB 2260 / Gabara) (Halobacterium pharaonis).